We begin with the raw amino-acid sequence, 55 residues long: Protein SOX-19 (55 aa).

The segment at residues 1 to 55 is a DNA-binding region (HMG box); sequence MVWSQIERRKIMEQWPDMHNAEISKRLGKRWKLLPDYEKIPFIKEAERLRLKHMA.

It localises to the nucleus. This is Protein SOX-19 (Sox19) from Mus musculus (Mouse).